The sequence spans 212 residues: Probable plastid-lipid-associated protein 11, chloroplastic (212 aa).

A chloroplast-targeting transit peptide spans 1-25 (MALALSLSACSPPLRRTRRAGFRTS).

Belongs to the PAP/fibrillin family.

The protein resides in the plastid. It is found in the chloroplast thylakoid. The chain is Probable plastid-lipid-associated protein 11, chloroplastic (PAP11) from Arabidopsis thaliana (Mouse-ear cress).